The sequence spans 319 residues: Shiga-like toxin 2 subunit A (319 aa).

Residues 1 to 22 form the signal peptide; it reads MKCILFKWVLCLLLGFSSVSYS. An A1 region spans residues 23–272; that stretch reads REFTIDFSTQ…CHHQGARSVR (250 aa). Residue E189 is part of the active site. A disulfide bond links C263 and C282. The interval 273–314 is A2; sequence AVNEESQPECQITGDRPVIKINNTLWESNTAAAFLNRKSQFL.

Belongs to the ribosome-inactivating protein family. Shiga-like toxin contains a single A subunit and multiple copies of a B subunit.

It localises to the secreted. The catalysed reaction is Endohydrolysis of the N-glycosidic bond at one specific adenosine on the 28S rRNA.. Functionally, the A subunit is responsible for inhibiting protein synthesis through the catalytic inactivation of 60S ribosomal subunits. After endocytosis, the A subunit is cleaved by furin in two fragments, A1 and A2: A1 is the catalytically active fragment, and A2 is essential for holotoxin assembly with the B subunits. The sequence is that of Shiga-like toxin 2 subunit A (stxA2) from Escherichia coli O157:H7 (Bacteriophage 933W).